Reading from the N-terminus, the 107-residue chain is uncharacterized protein (107 aa).

This is an uncharacterized protein from Microplitis demolitor (Parasitoid wasp).